The sequence spans 659 residues: Protein phosphatase Slingshot homolog 3 (659 aa).

Polar residues predominate over residues 1–16 (MALVTVSRSPPGSGAS). Residues 1–31 (MALVTVSRSPPGSGASTPVGPWDQAVQRRSR) are disordered. Alanine 2 is subject to N-acetylalanine. 2 positions are modified to phosphoserine: serine 9 and serine 37. A disordered region spans residues 46–96 (LGLQDGGDNDDAAEASSEPTEKAPSEEELHGDQTDFGQGSQSPQKQEEQRQ). The span at 64–78 (PTEKAPSEEELHGDQ) shows a compositional bias: basic and acidic residues. The span at 80 to 89 (DFGQGSQSPQ) shows a compositional bias: polar residues. A phosphoserine mark is found at serine 85 and serine 87. The DEK-C domain occupies 269–324 (EQMEQAIRAELWKVLDVSDLESVTSKEIRQALELRLGLPLQQYRDFIDNQMLLLVA). Residues 328–469 (RASRIFPHLY…LQIYQGILTA (142 aa)) form the Tyrosine-protein phosphatase domain. Cysteine 413 serves as the catalytic Phosphocysteine intermediate. Disordered stretches follow at residues 482-534 (GVSP…RINL), 547-603 (SLEL…RQSV), and 617-638 (QAFQEQEQGQGQGQGEPCISST). A compositionally biased stretch (low complexity) spans 547 to 557 (SLELESTSETS).

It belongs to the protein-tyrosine phosphatase family. Does not bind to, or colocalize with, filamentous actin.

Its subcellular location is the cytoplasm. It is found in the cytoskeleton. It localises to the nucleus. It carries out the reaction O-phospho-L-tyrosyl-[protein] + H2O = L-tyrosyl-[protein] + phosphate. The catalysed reaction is O-phospho-L-seryl-[protein] + H2O = L-seryl-[protein] + phosphate. It catalyses the reaction O-phospho-L-threonyl-[protein] + H2O = L-threonyl-[protein] + phosphate. Its function is as follows. Protein phosphatase which may play a role in the regulation of actin filament dynamics. Can dephosphorylate and activate the actin binding/depolymerizing factor cofilin, which subsequently binds to actin filaments and stimulates their disassembly. The polypeptide is Protein phosphatase Slingshot homolog 3 (SSH3) (Homo sapiens (Human)).